The following is a 660-amino-acid chain: Squalene--hopene cyclase (660 aa).

A PFTB 1 repeat occupies 73–114 (EAKIGNYLRRVQGAHGGWPLVHDGEFDMSASVKAYFALKMIG). Asp394 acts as the Proton donor in catalysis. PFTB repeat units follow at residues 419-460 (IDRG…GALL) and 536-586 (IRKA…ALMA).

It belongs to the terpene cyclase/mutase family.

The protein resides in the cell membrane. It catalyses the reaction squalene = hop-22(29)-ene. The catalysed reaction is squalene + H2O = hopan-22-ol. It functions in the pathway secondary metabolite biosynthesis; hopanoid biosynthesis. Its function is as follows. Catalyzes the cyclization of squalene into hopene. The protein is Squalene--hopene cyclase (shc) of Bradyrhizobium diazoefficiens (strain JCM 10833 / BCRC 13528 / IAM 13628 / NBRC 14792 / USDA 110).